The following is a 371-amino-acid chain: Chemerin-like receptor 1 (371 aa).

Over 1–39 (MEYDAYNDSGIYDDEYSDGFGYFVDLEEASPWEAKVAPV) the chain is Extracellular. Residue asparagine 7 is glycosylated (N-linked (GlcNAc...) asparagine). A helical membrane pass occupies residues 40–62 (FLVVIYSLVCFLGLLGNGLVIVI). The Cytoplasmic portion of the chain corresponds to 63-73 (ATFKMKKTVNT). A helical transmembrane segment spans residues 74–95 (VWFVNLAVADFLFNIFLPMHIT). The Extracellular segment spans residues 96-112 (YAAMDYHWVFGKAMCKI). A disulfide bridge links cysteine 110 with cysteine 187. Residues 113–133 (SNFLLSHNMYTSVFLLTVISF) form a helical membrane-spanning segment. At 134–152 (DRCISVLLPVWSQNHRSIR) the chain is on the cytoplasmic side. The chain crosses the membrane as a helical span at residues 153–174 (LAYMTCSAVWVLAFFLSSPSLV). Residues 175–222 (FRDTANIHGKITCFNNFSLAAPESSPHPAHSQVVSTGYSRHVAVTVTR) lie on the Extracellular side of the membrane. An N-linked (GlcNAc...) asparagine glycan is attached at asparagine 190. Residues 223–243 (FLCGFLIPVFIITACYLTIVF) traverse the membrane as a helical segment. The Cytoplasmic portion of the chain corresponds to 244-259 (KLQRNRLAKNKKPFKI). A helical membrane pass occupies residues 260–280 (IITIIITFFLCWCPYHTLYLL). Over 281-298 (ELHHTAVPSSVFSLGLPL) the chain is Extracellular. The chain crosses the membrane as a helical span at residues 299–318 (ATAVAIANSCMNPILYVFMG). Residues 319–371 (HDFRKFKVALFSRLANALSEDTGPSSYPSHRSFTKMSSLNEKASVNEKETSTL) are Cytoplasmic-facing. Serine 337 is subject to Phosphoserine. At threonine 340 the chain carries Phosphothreonine. Residues serine 347, serine 350, and serine 356 each carry the phosphoserine modification. Threonine 370 carries the phosphothreonine modification.

The protein belongs to the chemokine-like receptor (CMKLR) family. Expressed in the differentiated adipocytes (at protein level). Ubiquitous. Highly expressed in adipose tissue and immature plasmacytoid dendritic cells (DCs) and at lower levels in myeloid DCs, macrophages, and NK cells. Expressed on macrophages isolated from different tissues, including peritoneal cavities, pleural cavities and spleen.

It is found in the cell membrane. Its function is as follows. Receptor for the chemoattractant adipokine chemerin/RARRES2 and for the omega-3 fatty acid derived molecule resolvin E1. Interaction with RARRES2 initiates activation of G proteins G(i)/G(o) and beta-arrestin pathways inducing cellular responses via second messenger pathways such as intracellular calcium mobilization, phosphorylation of MAP kinases MAPK1/MAPK3 (ERK1/2), TYRO3, MAPK14/P38MAPK and PI3K leading to multifunctional effects, like, reduction of immune responses, enhancing of adipogenesis and angionesis. Resolvin E1 down-regulates cytokine production in macrophages by reducing the activation of MAPK1/3 (ERK1/2) and NF-kappa-B. Positively regulates adipogenesis and adipocyte metabolism. The chain is Chemerin-like receptor 1 (Cmklr1) from Mus musculus (Mouse).